A 469-amino-acid chain; its full sequence is Septin homolog spn1 (469 aa).

A disordered region spans residues 1–58 (MASMVLADGMPTVKDDSTRSRGSDVDSFTSTDNVTQINVEAAISENKNEEKPIQDNSE). Over residues 13–24 (VKDDSTRSRGSD) the composition is skewed to basic and acidic residues. Polar residues predominate over residues 26–38 (DSFTSTDNVTQIN). The Septin-type G domain maps to 92–367 (QGFNFNVLVL…EAYRTERLLS (276 aa)). Residues 102 to 109 (GESGSGKS) are G1 motif. Residues 102–109 (GESGSGKS), Thr-139, Gly-165, 244–252 (KADTLTDDE), and Arg-317 each bind GTP. The G3 motif stretch occupies residues 162–165 (DTPG). Positions 243–246 (AKAD) are G4 motif. A coiled-coil region spans residues 383-469 (SAKLEEERAL…NEKSKRKFFK (87 aa)).

It belongs to the TRAFAC class TrmE-Era-EngA-EngB-Septin-like GTPase superfamily. Septin GTPase family. As to quaternary structure, component of the septin complex composed of two copies of each spn1, spn2, spn3 and spn4.

It is found in the cytoplasm. The protein localises to the cell cortex. In terms of biological role, plays a role in the cell cycle. Involved in a late stage of septum formation leading to the separation of the daughter cells. In Schizosaccharomyces pombe (strain 972 / ATCC 24843) (Fission yeast), this protein is Septin homolog spn1 (spn1).